The chain runs to 57 residues: Large ribosomal subunit protein bL32 (57 aa).

This sequence belongs to the bacterial ribosomal protein bL32 family.

In Staphylococcus haemolyticus (strain JCSC1435), this protein is Large ribosomal subunit protein bL32.